Consider the following 62-residue polypeptide: Double zinc ribbon protein TK0111 (62 aa).

Zn(2+) contacts are provided by cysteine 13, cysteine 16, cysteine 31, cysteine 34, cysteine 42, cysteine 45, cysteine 54, and cysteine 57.

Crystallized in association with 70S ribosomes. Requires Zn(2+) as cofactor.

This chain is Double zinc ribbon protein TK0111, found in Thermococcus kodakarensis (strain ATCC BAA-918 / JCM 12380 / KOD1) (Pyrococcus kodakaraensis (strain KOD1)).